Here is a 350-residue protein sequence, read N- to C-terminus: Methionine import ATP-binding protein MetN (350 aa).

The ABC transporter domain occupies 9-245; sequence LKDVDVEFHG…PQQQLTKDFI (237 aa). 43-50 contributes to the ATP binding site; sequence GYSGAGKS.

The protein belongs to the ABC transporter superfamily. Methionine importer (TC 3.A.1.24) family. In terms of assembly, the complex is composed of two ATP-binding proteins (MetN), two transmembrane proteins (MetI) and a solute-binding protein (MetQ).

Its subcellular location is the cell membrane. The enzyme catalyses L-methionine(out) + ATP + H2O = L-methionine(in) + ADP + phosphate + H(+). It carries out the reaction D-methionine(out) + ATP + H2O = D-methionine(in) + ADP + phosphate + H(+). Functionally, part of the ABC transporter complex MetNIQ involved in methionine import. Responsible for energy coupling to the transport system. The polypeptide is Methionine import ATP-binding protein MetN (Lacticaseibacillus paracasei (strain ATCC 334 / BCRC 17002 / CCUG 31169 / CIP 107868 / KCTC 3260 / NRRL B-441) (Lactobacillus paracasei)).